Consider the following 418-residue polypeptide: Putative ion-transport protein YfeO (418 aa).

The next 12 helical transmembrane spans lie at Leu-10 to Val-30, Asp-54 to Ile-74, Ala-99 to Pro-119, Glu-120 to Pro-140, Ile-149 to Ile-169, Leu-186 to Pro-206, Ile-223 to Cys-243, Val-258 to Val-278, Asp-300 to Phe-320, Gly-322 to His-342, Val-343 to Val-363, and Leu-371 to Met-391.

This sequence belongs to the chloride channel (TC 2.A.49) family.

Its subcellular location is the cell membrane. The polypeptide is Putative ion-transport protein YfeO (Escherichia coli (strain 55989 / EAEC)).